A 523-amino-acid polypeptide reads, in one-letter code: FAD-dependent monooxygenase drtC (523 aa).

An FAD-binding PCMH-type domain is found at 77-252 (TSLNSACIVL…TNFEVRAFPQ (176 aa)).

The protein belongs to the oxygen-dependent FAD-linked oxidoreductase family. FAD serves as cofactor.

Its pathway is secondary metabolite biosynthesis; terpenoid biosynthesis. Its function is as follows. FAD-dependent monooxygenase; part of the gene cluster that mediates the biosynthesis of various drimane-type sesquiterpene esters, compounds that exhibit diverse biological activities and are widely present in eukaryotes. The pathway begins with the synthesis of the backbone drimenol by the terpene cyclase drtB using farnesyl pyrophosphate (FPP) as substrate. The cytochrome P450 monooxygenase drtD is then responsible for the hydroxylations at C-6, C-9 and C-12, as well as the oxidation of hydroxyl groups at C-6 and C-11 to a ketone and an aldehyde, respectively. Then, the biosynthesis can go in two directions, either the hydroxylated drimenol is further hydroxylated at C-2 and C-3 by an enzyme(s) not associated with the drt cluster, or the FAD-binding oxidoreductase drtC further oxidizes C-11 or C-12 to form the butyrolactone ring. DrtB, drtD and drtC are solely responsible for the formation of the different drimane structures observed during drimane sesquiterpenes biosynthesis. The polyketide synthase drtA synthesizes different lengths (C6 and C8) of PKS chains, which are then oxidized to varying degrees by the short-chain dehydrogenase drtF. Finally, these PKS chains are transferred onto drimane sesquiterpenes by the acyltransferase drtE, forming the sesquiterpene esters. In addition to the different fatty acyl-CoA chains produced by drtA, drtE is also able to use cinnamoyl-CoA as a substrate. The polypeptide is FAD-dependent monooxygenase drtC (Aspergillus calidoustus).